The primary structure comprises 69 residues: Protein transport protein Sec61 subunit gamma-1 (69 aa).

Position 1 is an N-acetylmethionine (methionine 1). Over 1–32 (MDAIDSVVDPLRDFAKDSIRLVKRCHKPDRKE) the chain is Cytoplasmic. A helical membrane pass occupies residues 33–61 (FTKVAVRTAIGFVVMGFVGFFVKLIFIPI). At 62 to 69 (NNIIVGAT) the chain is on the extracellular side.

It belongs to the SecE/SEC61-gamma family. In terms of assembly, heterotrimeric complex composed of SEC61-alpha, SEC61-beta and SEC61-gamma.

Its subcellular location is the endoplasmic reticulum membrane. Functionally, necessary for protein translocation in the endoplasmic reticulum. This is Protein transport protein Sec61 subunit gamma-1 (SEC61G1) from Arabidopsis thaliana (Mouse-ear cress).